The primary structure comprises 310 residues: MVMSVINWFEDRQKFGGLIGAFLEEATRSSMTNERDRRISVNANKGLWARCDNCGNMLYVKFLKQNRSVCEECGYHLSMSSMERIELLIDPNTWIPLDEDMSARDILSFSDEDSYETRILLSQEKTGLTDAVQTGIGYLNGTLIALGVMDFHFMGGSMGSVVGEKITRLIEYATQRLLPLVLICASGGARMQEGTLSLMQMAKISSVLQLYQVQNKLLYISVLTYPTTGGVTASFGMLGDIIIAEPKAYIAFAGKRVIEQTLRQKIPDGFQAAESLFDNGLLDLIVPRNLLKGVLSEISGLYLSVPYNKN.

The CoA carboxyltransferase N-terminal domain maps to 47–310 (LWARCDNCGN…LYLSVPYNKN (264 aa)). Residues Cys-51, Cys-54, Cys-70, and Cys-73 each coordinate Zn(2+). Residues 51-73 (CDNCGNMLYVKFLKQNRSVCEEC) form a C4-type zinc finger.

The protein belongs to the AccD/PCCB family. In terms of assembly, acetyl-CoA carboxylase is a heterohexamer composed of biotin carboxyl carrier protein, biotin carboxylase and 2 subunits each of ACCase subunit alpha and ACCase plastid-coded subunit beta (accD). It depends on Zn(2+) as a cofactor.

It localises to the plastid. It is found in the chloroplast stroma. The enzyme catalyses N(6)-carboxybiotinyl-L-lysyl-[protein] + acetyl-CoA = N(6)-biotinyl-L-lysyl-[protein] + malonyl-CoA. Its pathway is lipid metabolism; malonyl-CoA biosynthesis; malonyl-CoA from acetyl-CoA: step 1/1. Functionally, component of the acetyl coenzyme A carboxylase (ACC) complex. Biotin carboxylase (BC) catalyzes the carboxylation of biotin on its carrier protein (BCCP) and then the CO(2) group is transferred by the transcarboxylase to acetyl-CoA to form malonyl-CoA. This is Acetyl-coenzyme A carboxylase carboxyl transferase subunit beta, chloroplastic from Adiantum capillus-veneris (Maidenhair fern).